Here is a 369-residue protein sequence, read N- to C-terminus: NADH-quinone oxidoreductase subunit H (369 aa).

Transmembrane regions (helical) follow at residues 20 to 40 (VLLIKIMAVIISVMVSVAYLV), 88 to 108 (ICFLIAPIITFTLALLGWAVI), 133 to 153 (IGVLYILAISSLGVYGIIIAG), 179 to 199 (IGLTIVTVLLATGSLKLGEIV), 205 to 225 (MPYWIDLLLLPMACVFFISSL), 267 to 287 (ILINAMAVIFFFGGWYPPLNI), 293 to 313 (IPGIIWFVLKIIVLLFCFIWI), and 328 to 348 (LGWKVFLPISLLWVVLVSGVL).

This sequence belongs to the complex I subunit 1 family. As to quaternary structure, NDH-1 is composed of 14 different subunits. Subunits NuoA, H, J, K, L, M, N constitute the membrane sector of the complex.

The protein resides in the cell inner membrane. It catalyses the reaction a quinone + NADH + 5 H(+)(in) = a quinol + NAD(+) + 4 H(+)(out). Functionally, NDH-1 shuttles electrons from NADH, via FMN and iron-sulfur (Fe-S) centers, to quinones in the respiratory chain. The immediate electron acceptor for the enzyme in this species is believed to be ubiquinone. Couples the redox reaction to proton translocation (for every two electrons transferred, four hydrogen ions are translocated across the cytoplasmic membrane), and thus conserves the redox energy in a proton gradient. This subunit may bind ubiquinone. This Ehrlichia canis (strain Jake) protein is NADH-quinone oxidoreductase subunit H.